A 69-amino-acid chain; its full sequence is Large ribosomal subunit protein bL31 (69 aa).

Cys-16, Cys-18, Cys-37, and Cys-40 together coordinate Zn(2+).

This sequence belongs to the bacterial ribosomal protein bL31 family. Type A subfamily. In terms of assembly, part of the 50S ribosomal subunit. Zn(2+) serves as cofactor.

Binds the 23S rRNA. This Syntrophotalea carbinolica (strain DSM 2380 / NBRC 103641 / GraBd1) (Pelobacter carbinolicus) protein is Large ribosomal subunit protein bL31.